Reading from the N-terminus, the 431-residue chain is Adenylosuccinate synthetase (431 aa).

GTP contacts are provided by residues 13-19 (GDEGKGK) and 41-43 (GHT). Aspartate 14 serves as the catalytic Proton acceptor. Positions 14 and 41 each coordinate Mg(2+). Residues 14-17 (DEGK), 39-42 (NAGH), threonine 130, arginine 144, glutamine 225, threonine 240, and arginine 304 contribute to the IMP site. The active-site Proton donor is the histidine 42. 300–306 (SVTGRPR) provides a ligand contact to substrate. Residues arginine 306, 332–334 (KLD), and 414–416 (STG) contribute to the GTP site.

Belongs to the adenylosuccinate synthetase family. As to quaternary structure, homodimer. Mg(2+) serves as cofactor.

It is found in the cytoplasm. It catalyses the reaction IMP + L-aspartate + GTP = N(6)-(1,2-dicarboxyethyl)-AMP + GDP + phosphate + 2 H(+). It participates in purine metabolism; AMP biosynthesis via de novo pathway; AMP from IMP: step 1/2. Plays an important role in the de novo pathway of purine nucleotide biosynthesis. Catalyzes the first committed step in the biosynthesis of AMP from IMP. This chain is Adenylosuccinate synthetase, found in Bordetella avium (strain 197N).